We begin with the raw amino-acid sequence, 151 residues long: Deoxyuridine 5'-triphosphate nucleotidohydrolase (151 aa).

Residues arginine 70–glycine 72, asparagine 83, leucine 87–aspartate 89, and methionine 97 contribute to the substrate site.

It belongs to the dUTPase family. Homotrimer. Requires Mg(2+) as cofactor.

It carries out the reaction dUTP + H2O = dUMP + diphosphate + H(+). It participates in pyrimidine metabolism; dUMP biosynthesis; dUMP from dCTP (dUTP route): step 2/2. Its function is as follows. This enzyme is involved in nucleotide metabolism: it produces dUMP, the immediate precursor of thymidine nucleotides and it decreases the intracellular concentration of dUTP so that uracil cannot be incorporated into DNA. The sequence is that of Deoxyuridine 5'-triphosphate nucleotidohydrolase from Escherichia coli O7:K1 (strain IAI39 / ExPEC).